The chain runs to 903 residues: Protein translocase subunit SecA (903 aa).

Residues Gln87, 105–109 (GEGKT), and Asp494 each bind ATP. A disordered region spans residues 861-883 (SGSQGAAPRQPVRAEGKKVGRND). A compositionally biased stretch (basic and acidic residues) spans 872-881 (VRAEGKKVGR). Zn(2+) is bound by residues Cys885, Cys887, Cys896, and Cys897.

The protein belongs to the SecA family. Monomer and homodimer. Part of the essential Sec protein translocation apparatus which comprises SecA, SecYEG and auxiliary proteins SecDF. Other proteins may also be involved. The cofactor is Zn(2+).

It is found in the cell membrane. The protein resides in the cytoplasm. The catalysed reaction is ATP + H2O + cellular proteinSide 1 = ADP + phosphate + cellular proteinSide 2.. Part of the Sec protein translocase complex. Interacts with the SecYEG preprotein conducting channel. Has a central role in coupling the hydrolysis of ATP to the transfer of proteins into and across the cell membrane, serving as an ATP-driven molecular motor driving the stepwise translocation of polypeptide chains across the membrane. The polypeptide is Protein translocase subunit SecA (Symbiobacterium thermophilum (strain DSM 24528 / JCM 14929 / IAM 14863 / T)).